We begin with the raw amino-acid sequence, 60 residues long: Large ribosomal subunit protein bL32 (60 aa).

Belongs to the bacterial ribosomal protein bL32 family.

The sequence is that of Large ribosomal subunit protein bL32 from Borreliella afzelii (strain PKo) (Borrelia afzelii).